Reading from the N-terminus, the 337-residue chain is Transcription factor HBI1 (337 aa).

Residues 119-180 (VALKNKRKPE…SKGASENQKL (62 aa)) are disordered. Over residues 126 to 151 (KPEVKTREEQKTEKKIKVEAETESSM) the composition is skewed to basic and acidic residues. Polar residues predominate over residues 152 to 165 (KGKSNMGNTEASSD). In terms of domain architecture, bHLH spans 191-241 (QATDRHSLAERARREKISKKMKYLQDIVPGCNKVTGKAGMLDEIINYVQCL).

Homodimer. Interacts with IBH1. In terms of tissue distribution, highly expressed in hypocotyls and cotyledons. Expressed in leaves, stems, and flowers.

The protein localises to the nucleus. Atypical bHLH transcription factor that acts as a positive regulator of cell elongation downstream of multiple external and endogenous signals by direct binding to the promoters and activation of the two expansin genes EXPA1 and EXPA8, encoding cell wall loosening enzymes. Transcriptional activity is inhibited when binding to the bHLH transcription factor IBH1. The polypeptide is Transcription factor HBI1 (HBI1) (Arabidopsis thaliana (Mouse-ear cress)).